The primary structure comprises 141 residues: Large ribosomal subunit protein uL11 (141 aa).

This sequence belongs to the universal ribosomal protein uL11 family. Part of the ribosomal stalk of the 50S ribosomal subunit. Interacts with L10 and the large rRNA to form the base of the stalk. L10 forms an elongated spine to which L12 dimers bind in a sequential fashion forming a multimeric L10(L12)X complex. One or more lysine residues are methylated.

Its function is as follows. Forms part of the ribosomal stalk which helps the ribosome interact with GTP-bound translation factors. This is Large ribosomal subunit protein uL11 from Shouchella clausii (strain KSM-K16) (Alkalihalobacillus clausii).